Reading from the N-terminus, the 195-residue chain is ATP-dependent Clp protease proteolytic subunit (195 aa).

S98 functions as the Nucleophile in the catalytic mechanism. Residue H123 is part of the active site.

It belongs to the peptidase S14 family. As to quaternary structure, fourteen ClpP subunits assemble into 2 heptameric rings which stack back to back to give a disk-like structure with a central cavity, resembling the structure of eukaryotic proteasomes.

It localises to the cytoplasm. The catalysed reaction is Hydrolysis of proteins to small peptides in the presence of ATP and magnesium. alpha-casein is the usual test substrate. In the absence of ATP, only oligopeptides shorter than five residues are hydrolyzed (such as succinyl-Leu-Tyr-|-NHMec, and Leu-Tyr-Leu-|-Tyr-Trp, in which cleavage of the -Tyr-|-Leu- and -Tyr-|-Trp bonds also occurs).. Functionally, cleaves peptides in various proteins in a process that requires ATP hydrolysis. Has a chymotrypsin-like activity. Plays a major role in the degradation of misfolded proteins. This chain is ATP-dependent Clp protease proteolytic subunit, found in Helicobacter pylori (strain Shi470).